Here is a 963-residue protein sequence, read N- to C-terminus: Bifunctional glutamine synthetase adenylyltransferase/adenylyl-removing enzyme (963 aa).

The interval 1 to 453 is adenylyl removase; it reads MLTTLIPLSQ…IFNEIIGEEE (453 aa). The tract at residues 461–963 is adenylyl transferase; the sequence is VNEKLAEWKD…VREMWQRLLA (503 aa).

This sequence belongs to the GlnE family. Mg(2+) serves as cofactor.

The enzyme catalyses [glutamine synthetase]-O(4)-(5'-adenylyl)-L-tyrosine + phosphate = [glutamine synthetase]-L-tyrosine + ADP. The catalysed reaction is [glutamine synthetase]-L-tyrosine + ATP = [glutamine synthetase]-O(4)-(5'-adenylyl)-L-tyrosine + diphosphate. In terms of biological role, involved in the regulation of glutamine synthetase GlnA, a key enzyme in the process to assimilate ammonia. When cellular nitrogen levels are high, the C-terminal adenylyl transferase (AT) inactivates GlnA by covalent transfer of an adenylyl group from ATP to specific tyrosine residue of GlnA, thus reducing its activity. Conversely, when nitrogen levels are low, the N-terminal adenylyl removase (AR) activates GlnA by removing the adenylyl group by phosphorolysis, increasing its activity. The regulatory region of GlnE binds the signal transduction protein PII (GlnB) which indicates the nitrogen status of the cell. In Mannheimia haemolytica (Pasteurella haemolytica), this protein is Bifunctional glutamine synthetase adenylyltransferase/adenylyl-removing enzyme.